A 294-amino-acid polypeptide reads, in one-letter code: 4-hydroxy-tetrahydrodipicolinate synthase (294 aa).

T45 provides a ligand contact to pyruvate. The active-site Proton donor/acceptor is the Y133. The active-site Schiff-base intermediate with substrate is the K161. I203 is a binding site for pyruvate.

The protein belongs to the DapA family. Homotetramer; dimer of dimers.

The protein resides in the cytoplasm. It catalyses the reaction L-aspartate 4-semialdehyde + pyruvate = (2S,4S)-4-hydroxy-2,3,4,5-tetrahydrodipicolinate + H2O + H(+). It functions in the pathway amino-acid biosynthesis; L-lysine biosynthesis via DAP pathway; (S)-tetrahydrodipicolinate from L-aspartate: step 3/4. In terms of biological role, catalyzes the condensation of (S)-aspartate-beta-semialdehyde [(S)-ASA] and pyruvate to 4-hydroxy-tetrahydrodipicolinate (HTPA). The sequence is that of 4-hydroxy-tetrahydrodipicolinate synthase from Shewanella frigidimarina (strain NCIMB 400).